A 186-amino-acid chain; its full sequence is MPTQRKIETVADLKQRLKRMQVTVVADYRGLSVADMTELRKKLRESGAEFVVAKNTLTLIAARETGHEAIEPLLAGPTALAFAYDDVPKFVKAINEFNRGPKKIIVRGGLVGTMLLNENVLDTVASLPTKEEVRAQVLGGLAAPVTGLAGIIAAPVNDIVNLLDATSKSILYALQARIDQLQPSAS.

Belongs to the universal ribosomal protein uL10 family. As to quaternary structure, part of the ribosomal stalk of the 50S ribosomal subunit. The N-terminus interacts with L11 and the large rRNA to form the base of the stalk. The C-terminus forms an elongated spine to which L12 dimers bind in a sequential fashion forming a multimeric L10(L12)X complex.

Its function is as follows. Forms part of the ribosomal stalk, playing a central role in the interaction of the ribosome with GTP-bound translation factors. The protein is Large ribosomal subunit protein uL10 of Roseiflexus sp. (strain RS-1).